The primary structure comprises 130 residues: Small ribosomal subunit protein uS8 (130 aa).

The protein belongs to the universal ribosomal protein uS8 family. As to quaternary structure, part of the 30S ribosomal subunit. Contacts proteins S5 and S12.

Its function is as follows. One of the primary rRNA binding proteins, it binds directly to 16S rRNA central domain where it helps coordinate assembly of the platform of the 30S subunit. This is Small ribosomal subunit protein uS8 from Saccharophagus degradans (strain 2-40 / ATCC 43961 / DSM 17024).